The chain runs to 255 residues: BTB/POZ domain-containing protein kctd15 (255 aa).

In terms of domain architecture, BTB spans 30–100 (APVHIDVGGH…LRTSKLLLPE (71 aa)).

In terms of assembly, forms oligomers, predominantly homopentamers. Interacts with TFAP2A; this interaction inhibits TFAP2A transcriptional activation.

It localises to the nucleus. In terms of biological role, during embryonic development, interferes with neural crest formation. Inhibits AP2 transcriptional activity by interaction with its activation domain. The sequence is that of BTB/POZ domain-containing protein kctd15 (kctd15) from Xenopus tropicalis (Western clawed frog).